We begin with the raw amino-acid sequence, 540 residues long: Chaperonin GroEL 1 (540 aa).

Residues 29–32, 86–90, glycine 413, 478–480, and aspartate 494 each bind ATP; these read TLGP, DGTTT, and NAA.

It belongs to the chaperonin (HSP60) family. As to quaternary structure, forms a cylinder of 14 subunits composed of two heptameric rings stacked back-to-back. Interacts with the co-chaperonin GroES.

It is found in the cytoplasm. It catalyses the reaction ATP + H2O + a folded polypeptide = ADP + phosphate + an unfolded polypeptide.. Together with its co-chaperonin GroES, plays an essential role in assisting protein folding. The GroEL-GroES system forms a nano-cage that allows encapsulation of the non-native substrate proteins and provides a physical environment optimized to promote and accelerate protein folding. In Mycobacterium sp. (strain JLS), this protein is Chaperonin GroEL 1.